Consider the following 161-residue polypeptide: E3 ubiquitin ligase complex SCF subunit sconC (161 aa).

Residues 103–161 (ILAANYLDIKGLLDVGCKTVANMIKGKSPEEIRKTFNIQNDFTPEEEDQIRRENEWAEE) are interaction with the F-box domain of F-box proteins.

The protein belongs to the SKP1 family. As to quaternary structure, component of the SCF (SKP1-CUL1-F-box protein) E3 ubiquitin ligase complexes.

The protein operates within protein modification; protein ubiquitination. In terms of biological role, essential component of the SCF (SKP1-CUL1-F-box protein) E3 ubiquitin ligase complexes, which mediate the ubiquitination and subsequent proteasomal degradation of target proteins. Controls sulfur metabolite repression, probably by mediating the inactivation or degradation of the metR transcription factor. The polypeptide is E3 ubiquitin ligase complex SCF subunit sconC (sconC) (Aspergillus terreus (strain NIH 2624 / FGSC A1156)).